The sequence spans 145 residues: D-aminoacyl-tRNA deacylase (145 aa).

The Gly-cisPro motif, important for rejection of L-amino acids motif lies at 137 to 138; the sequence is GP.

This sequence belongs to the DTD family. In terms of assembly, homodimer.

The protein resides in the cytoplasm. The enzyme catalyses glycyl-tRNA(Ala) + H2O = tRNA(Ala) + glycine + H(+). The catalysed reaction is a D-aminoacyl-tRNA + H2O = a tRNA + a D-alpha-amino acid + H(+). Its function is as follows. An aminoacyl-tRNA editing enzyme that deacylates mischarged D-aminoacyl-tRNAs. Also deacylates mischarged glycyl-tRNA(Ala), protecting cells against glycine mischarging by AlaRS. Acts via tRNA-based rather than protein-based catalysis; rejects L-amino acids rather than detecting D-amino acids in the active site. By recycling D-aminoacyl-tRNA to D-amino acids and free tRNA molecules, this enzyme counteracts the toxicity associated with the formation of D-aminoacyl-tRNA entities in vivo and helps enforce protein L-homochirality. The sequence is that of D-aminoacyl-tRNA deacylase from Pseudomonas savastanoi pv. phaseolicola (strain 1448A / Race 6) (Pseudomonas syringae pv. phaseolicola (strain 1448A / Race 6)).